We begin with the raw amino-acid sequence, 897 residues long: MTADGRGRIDAAFRGRLGRFVLDASLSVPATGVTAIFGPSGCGKTTIARCIAGLQRLSDGFCAIDGEIWQDGMAFRPAHRRPVGYVFQEPSLFPHLSVRGNLLYGAPKAAATSIGFDEVVELLGLTALLGRSPHRLSGGERQRVAIGRALLSQPRLLLMDEPLAALDRTTKNEILPFLERLHERLSLPVLYISHDMAEIERFADYLVLMERGRVVGAGPLHILQSDPALPLAYSRDAAVSIDGLVEAYDERYGLLTLAVNGGLLHVPSHRIAVGARQRLRIAASDVSIVRARPSESSILNILPARIVTQSPPGAGEVTIVLGLDSDGSGAPILSRISSRSRDLLGLSDGMAVFAQVKGVSLVRASGCAIGNMGPTAPGQLDHCSTQDTGVRSEAGTTAMPIDFAEIDPNRVAAILYRPQDDLDTLLADFAQDLVRAGERIGGIVQRNIKDGSGCQVGMQAIDLMTGREISICQPLGSGAMACKLDAAGLADASVAVASAIAQDVDLIVINKFSKQEAAGRGLRDELAGAIAAGIPVLTAVPEKCFEAWISFTGGIGTTLLCERQVIEAWWRDTSSRMKRMREDHDAVVAQCIEISGALPLVQRVVARQLVVTHDLPLDPERAEAEVVVRGVVERTNVEVLDGAADEADEAPDAGFPVGPERIERLPDIGPVPRRHEALQVEREVLSPDACLQRSAGERVDVFKEGKTKVGTVLVDRGDAELVEGPIVLELHEGAPVLVEMNVGVDLQTLYEIAVRGRVAGAERRCAIGLEAFAQRRPQRDVAFRIGGPKRDVFEPVKRFGTQPGIGKDRPVLCPAVRLDRRPLGDRSVLGPREPDAGAKGRKRQNDPEVAHIAPCQHRRTSPHLASARDALFGPREWISATYPPGNMTNAADRLLDV.

An ABC transporter domain is found at 6 to 236; sequence RGRIDAAFRG…PALPLAYSRD (231 aa). 38–45 provides a ligand contact to ATP; the sequence is GPSGCGKT. Positions 295-365 constitute a Mop domain; that stretch reads ESSILNILPA…VKGVSLVRAS (71 aa). Residues 823–848 form a disordered region; sequence LGDRSVLGPREPDAGAKGRKRQNDPE. A compositionally biased stretch (basic and acidic residues) spans 832 to 848; the sequence is REPDAGAKGRKRQNDPE.

Belongs to the ABC transporter superfamily. Molybdate importer (TC 3.A.1.8) family. As to quaternary structure, the complex is composed of two ATP-binding proteins (ModC), two transmembrane proteins (ModB) and a solute-binding protein (ModA).

The protein localises to the cell inner membrane. It carries out the reaction molybdate(out) + ATP + H2O = molybdate(in) + ADP + phosphate + H(+). Its function is as follows. Part of the ABC transporter complex ModABC involved in molybdenum import. Responsible for energy coupling to the transport system. The polypeptide is Molybdenum import ATP-binding protein ModC 2 (Bradyrhizobium diazoefficiens (strain JCM 10833 / BCRC 13528 / IAM 13628 / NBRC 14792 / USDA 110)).